The sequence spans 931 residues: GPI ethanolamine phosphate transferase 1 (931 aa).

Residue Met-1 is a topological domain, cytoplasmic. Residues 2-24 (LLFFTLGLLIHFVFFASIFDIYF) form a helical membrane-spanning segment. Topologically, residues 25-442 (TSPLVHGMTP…SYYHTYDRFF (418 aa)) are lumenal. N-linked (GlcNAc...) asparagine glycosylation is found at Asn-128, Asn-192, and Asn-350. The chain crosses the membrane as a helical span at residues 443–463 (LGVNVVIGFVGWISYASLLII). Residues 464–482 (KSHSNLIKGVSKEVKKPSH) are Cytoplasmic-facing. The chain crosses the membrane as a helical span at residues 483–503 (LLPCSFVAIGILVAFFLLIQA). Topologically, residues 504–508 (CPWTY) are lumenal. A helical membrane pass occupies residues 509–529 (YVYGLLPLPIWYAVLREFQVI). Topologically, residues 530–543 (QDLVVSVLTYPLSH) are cytoplasmic. The helical transmembrane segment at 544–564 (FVGYLLAFTLGIEVLVLSFFY) threads the bilayer. Residue Arg-565 is a topological domain, lumenal. A helical membrane pass occupies residues 566-586 (YMLTAGLTAFAAWPFLTRLWT). The Cytoplasmic portion of the chain corresponds to 587–591 (RAKMT). Residues 592–612 (SLSWTFFSLLLAVFPLMPVVG) form a helical membrane-spanning segment. Over 613–618 (RKPDIS) the chain is Lumenal. Residues 619–639 (LVMGAGLLVLLLSLCVVTSLM) form a helical membrane-spanning segment. The Cytoplasmic segment spans residues 640–649 (KRKDSFIKEE). The helical transmembrane segment at 650 to 670 (LLVHLLQVLSTVLSMYVVYST) threads the bilayer. At 671-685 (QSSLLRKQGLPLMNQ) the chain is on the lumenal side. The chain crosses the membrane as a helical span at residues 686 to 706 (IISWATLASSLVVPLLSSPVL). At 707–723 (FQRLFSILLSLMSTYLL) the chain is on the cytoplasmic side. Residues 724–744 (LSTGYEALFPLVLSCLMFVWI) form a helical membrane-spanning segment. Over 745–786 (NIEQETLQQSGVCCKQKLTSIQFSYNTDITQFRQLYLDDIRR) the chain is Lumenal. Residues 787 to 807 (AFFLVFFLVTAFFGTGNIASI) traverse the membrane as a helical segment. Over 808 to 824 (NSFDLASVYCFLTVFSP) the chain is Cytoplasmic. The chain crosses the membrane as a helical span at residues 825-845 (FMMGALMMWKILIPFVLVMCA). Over 846 to 858 (FEAVQLTTQLSSK) the chain is Lumenal. Residues 859-879 (SLFLIVLVISDIMALHFFFLV) traverse the membrane as a helical segment. Over 880–894 (KDYGSWLDIGTSISH) the chain is Cytoplasmic. A helical transmembrane segment spans residues 895 to 915 (YVIVMSMTIFLVFLNGLAQLL). At 916–931 (TTKKLRLCGKPKSHFM) the chain is on the lumenal side.

Belongs to the PIGG/PIGN/PIGO family. PIGN subfamily.

The protein resides in the endoplasmic reticulum membrane. It functions in the pathway glycolipid biosynthesis; glycosylphosphatidylinositol-anchor biosynthesis. Its function is as follows. Ethanolamine phosphate transferase that catalyzes an ethanolamine phosphate (EtNP) transfer from phosphatidylethanolamine (PE) to the 2-OH position of the first alpha-1,4-linked mannose of the alpha-D-Man-(1-&gt;6)-alpha-D-Man-(1-&gt;4)-alpha-D-GlcN-(1-&gt;6)-(1-radyl,2-acyl-sn-glycero-3-phospho)-2-acyl-inositol (also termed H3) intermediate to generate an alpha-D-Man-(1-&gt;6)-2-PEtn-alpha-D-Man-(1-&gt;4)-alpha-D-GlcN-(1-&gt;6)-(1-radyl,2-acyl-sn-glycero-3-phospho)-2-acyl-inositol and participates in the eighth step of the glycosylphosphatidylinositol-anchor biosynthesis. May act as suppressor of replication stress and chromosome missegregation. This chain is GPI ethanolamine phosphate transferase 1, found in Homo sapiens (Human).